Reading from the N-terminus, the 298-residue chain is tRNA pseudouridine synthase B (298 aa).

D44 acts as the Nucleophile in catalysis.

This sequence belongs to the pseudouridine synthase TruB family. Type 1 subfamily.

The catalysed reaction is uridine(55) in tRNA = pseudouridine(55) in tRNA. Responsible for synthesis of pseudouridine from uracil-55 in the psi GC loop of transfer RNAs. This is tRNA pseudouridine synthase B from Mycobacteroides abscessus (strain ATCC 19977 / DSM 44196 / CCUG 20993 / CIP 104536 / JCM 13569 / NCTC 13031 / TMC 1543 / L948) (Mycobacterium abscessus).